The chain runs to 100 residues: NAD(P)H-quinone oxidoreductase subunit 4L, chloroplastic (100 aa).

3 helical membrane passes run 1-21 (MIEN…YGLI), 27-47 (IKVL…LVAF), and 61-81 (FAVF…AIVF).

It belongs to the complex I subunit 4L family. As to quaternary structure, NDH is composed of at least 16 different subunits, 5 of which are encoded in the nucleus.

The protein resides in the plastid. It is found in the chloroplast thylakoid membrane. The enzyme catalyses a plastoquinone + NADH + (n+1) H(+)(in) = a plastoquinol + NAD(+) + n H(+)(out). It catalyses the reaction a plastoquinone + NADPH + (n+1) H(+)(in) = a plastoquinol + NADP(+) + n H(+)(out). Its function is as follows. NDH shuttles electrons from NAD(P)H:plastoquinone, via FMN and iron-sulfur (Fe-S) centers, to quinones in the photosynthetic chain and possibly in a chloroplast respiratory chain. The immediate electron acceptor for the enzyme in this species is believed to be plastoquinone. Couples the redox reaction to proton translocation, and thus conserves the redox energy in a proton gradient. The chain is NAD(P)H-quinone oxidoreductase subunit 4L, chloroplastic from Chaetosphaeridium globosum (Charophycean green alga).